Here is a 118-residue protein sequence, read N- to C-terminus: Basic phospholipase A2 1 (118 aa).

Cystine bridges form between Cys-11–Cys-72, Cys-26–Cys-117, Cys-28–Cys-44, Cys-43–Cys-98, Cys-50–Cys-91, Cys-60–Cys-84, and Cys-78–Cys-89. Tyr-27, Gly-29, and Gly-31 together coordinate Ca(2+). The active site involves His-47. Asp-48 is a Ca(2+) binding site. Asp-92 is a catalytic residue.

It belongs to the phospholipase A2 family. Group I subfamily. D49 sub-subfamily. Ca(2+) is required as a cofactor. As to expression, expressed by the venom gland.

The protein resides in the secreted. It catalyses the reaction a 1,2-diacyl-sn-glycero-3-phosphocholine + H2O = a 1-acyl-sn-glycero-3-phosphocholine + a fatty acid + H(+). In terms of biological role, PLA2 catalyzes the calcium-dependent hydrolysis of the 2-acyl groups in 3-sn-phosphoglycerides. This Naja melanoleuca (Forest cobra) protein is Basic phospholipase A2 1.